We begin with the raw amino-acid sequence, 287 residues long: Histone H1 (287 aa).

The segment covering 1-11 (MATEEPVIVNE) has biased composition (low complexity). 2 disordered regions span residues 1–58 (MATE…THPP) and 120–287 (YKLP…RGRK). Over residues 33 to 51 (GKAKKETKAKKPAAPRKRS) the composition is skewed to basic residues. The region spanning 55-124 (THPPYFEMIK…KVKNSYKLPS (70 aa)) is the H15 domain. Over residues 135–202 (AKKKPAAAKS…KAKPVAKAKP (68 aa)) the composition is skewed to basic residues. Positions 203–248 (KAAAAAKPKAAVKPKAAPAKTKAAVKPNLKAKTTTAKVAKTATRTT) are enriched in low complexity. Residues 276–287 (PAKKATPKRGRK) show a composition bias toward basic residues.

This sequence belongs to the histone H1/H5 family.

Its subcellular location is the nucleus. The protein localises to the chromosome. In terms of biological role, histones H1 are necessary for the condensation of nucleosome chains into higher-order structures. The sequence is that of Histone H1 from Solanum lycopersicum (Tomato).